A 208-amino-acid chain; its full sequence is Uracil phosphoribosyltransferase (208 aa).

5-phospho-alpha-D-ribose 1-diphosphate-binding positions include R78, R103, and 130 to 138; that span reads DPMLATGGS. Uracil-binding positions include I193 and 198–200; that span reads GDA. D199 is a binding site for 5-phospho-alpha-D-ribose 1-diphosphate.

Belongs to the UPRTase family. It depends on Mg(2+) as a cofactor.

It carries out the reaction UMP + diphosphate = 5-phospho-alpha-D-ribose 1-diphosphate + uracil. It participates in pyrimidine metabolism; UMP biosynthesis via salvage pathway; UMP from uracil: step 1/1. Its activity is regulated as follows. Allosterically activated by GTP. Its function is as follows. Catalyzes the conversion of uracil and 5-phospho-alpha-D-ribose 1-diphosphate (PRPP) to UMP and diphosphate. The chain is Uracil phosphoribosyltransferase from Citrobacter koseri (strain ATCC BAA-895 / CDC 4225-83 / SGSC4696).